The sequence spans 461 residues: Serine/threonine-protein kinase 4 homolog A (461 aa).

Residues 20-273 (FTIVEKLGEG…AEELLKHPFI (254 aa)) form the Protein kinase domain. ATP-binding positions include 26–34 (LGEGSYGSV) and lysine 49. The Proton acceptor role is filled by aspartate 139. Threonine 173 carries the phosphothreonine; by autocatalysis modification. Disordered regions lie at residues 303-349 (GIEQ…EEYD) and 369-388 (NDDE…SNKK). The segment covering 307–322 (RDEEEEDEDEDSEDSD) has biased composition (acidic residues). The region spanning 411-458 (SDKYSSYSLEELKKMLAELEIEREKEVQKTLEKFSINRQALLAVIDEK) is the SARAH domain.

This sequence belongs to the protein kinase superfamily. STE Ser/Thr protein kinase family. STE20 subfamily. Mn(2+) serves as cofactor. Undergoes autophosphorylation in the catalytic domain.

The protein localises to the cytoplasm. It localises to the cytosol. It carries out the reaction L-seryl-[protein] + ATP = O-phospho-L-seryl-[protein] + ADP + H(+). The catalysed reaction is L-threonyl-[protein] + ATP = O-phospho-L-threonyl-[protein] + ADP + H(+). In terms of biological role, regulates both cAMP signaling during early development and the stress response. Functions as an activator of adenylylcyclase. The chain is Serine/threonine-protein kinase 4 homolog A (krsA) from Dictyostelium discoideum (Social amoeba).